A 207-amino-acid chain; its full sequence is Ras-related protein Rab-7a (207 aa).

An N-acetylthreonine modification is found at T2. GTP-binding residues include S17, G18, V19, G20, K21, T22, S23, S34, N35, Y37, and T40. Residue T22 coordinates Mg(2+). The short motif at 28–41 is the Switch 1 element; that stretch reads YVNKKFSNQYKATI. The Mg(2+) site is built by T40 and D63. G66 contacts GTP. The short motif at 67–82 is the Switch 2 element; it reads QERFQSLGVAFYRGAD. A Phosphoserine modification is found at S72. Residues N125, K126, D128, A156, and K157 each coordinate GTP. Residues K191 and K194 each participate in a glycyl lysine isopeptide (Lys-Gly) (interchain with G-Cter in ubiquitin) cross-link. Residues C205 and C207 are each lipidated (S-geranylgeranyl cysteine). C207 carries the post-translational modification Cysteine methyl ester.

This sequence belongs to the small GTPase superfamily. Rab family. In terms of assembly, interacts with NTRK1/TRKA, RILP, PSMA7, RNF115 and FYCO1. Interacts with the PIK3C3/VPS34-PIK3R4 complex. The GTP-bound form interacts with OSBPL1A and RAC1. Interacts with CLN3. Interacts with CHM, the substrate-binding subunit of the Rab geranylgeranyltransferase complex. Interacts with C9orf72. Does not interact with HPS4 and the BLOC-3 complex (heterodimer of HPS1 and HPS4). Interacts with CLN5. Interacts with PLEKHM1 (via N- and C-terminus). Interacts with PRPH; the interaction is direct. Interacts with VPS13A. The GDP-bound form interacts with RIMOC1. Interacts with the MON1A-CCZ1B complex and this interaction is enhanced in the presence of RIMOC1. Interacts with VPS39 and VPS41. Forms a ternary complex with LAMP2 and RUFY4; the interaction with LAMP2 is mediated by RUFY4 (via RUN and coiled coil domains). Requires Mg(2+) as cofactor. In terms of processing, deubiquitination at Lys-191 and Lys-194 by USP32. Phosphorylated at Ser-72 by LRRK1; phosphorylation is dependent on protein kinase C (PKC) activation of LRRK1. Post-translationally, prenylated. Prenylation is required for association with cellular membranes. As to expression, widely expressed. High expression in liver, heart and kidney. Found in sensory and motor neurons.

It is found in the cytoplasmic vesicle. Its subcellular location is the phagosome membrane. The protein resides in the late endosome membrane. The protein localises to the lysosome membrane. It localises to the melanosome membrane. It is found in the autophagosome membrane. Its subcellular location is the lipid droplet. The protein resides in the endosome membrane. The protein localises to the mitochondrion membrane. The catalysed reaction is GTP + H2O = GDP + phosphate + H(+). Regulated by guanine nucleotide exchange factors (GEFs) which promote the exchange of bound GDP for free GTP. Regulated by GTPase activating proteins (GAPs) which increase the GTP hydrolysis activity. Inhibited by GDP dissociation inhibitors (GDIs). The small GTPases Rab are key regulators of intracellular membrane trafficking, from the formation of transport vesicles to their fusion with membranes. Rabs cycle between an inactive GDP-bound form and an active GTP-bound form that is able to recruit to membranes different sets of downstream effectors directly responsible for vesicle formation, movement, tethering and fusion. In its active state, RAB7A binds to a variety of effector proteins playing a key role in the regulation of endo-lysosomal trafficking. Governs early-to-late endosomal maturation, microtubule minus-end as well as plus-end directed endosomal migration and positioning, and endosome-lysosome transport through different protein-protein interaction cascades. Also plays a central role in growth-factor-mediated cell signaling, nutrient-transporter-mediated nutrient uptake, neurotrophin transport in the axons of neurons and lipid metabolism. Also involved in regulation of some specialized endosomal membrane trafficking, such as maturation of melanosomes, pathogen-induced phagosomes (or vacuoles) and autophagosomes. Plays a role in the maturation and acidification of phagosomes that engulf pathogens, such as S.aureus and Mycobacteria. Plays a role in the fusion of phagosomes with lysosomes. In concert with RAC1, plays a role in regulating the formation of RBs (ruffled borders) in osteoclasts. Controls the endosomal trafficking and neurite outgrowth signaling of NTRK1/TRKA. Regulates the endocytic trafficking of the EGF-EGFR complex by regulating its lysosomal degradation. Involved in the ADRB2-stimulated lipolysis through lipophagy, a cytosolic lipase-independent autophagic pathway. Required for the exosomal release of SDCBP, CD63 and syndecan. Required for vesicular trafficking and cell surface expression of ACE2. May play a role in PRPH neuronal intermediate filament assembly. This chain is Ras-related protein Rab-7a, found in Mus musculus (Mouse).